Here is a 1029-residue protein sequence, read N- to C-terminus: Probable E3 ubiquitin protein ligase C167.07c (1029 aa).

The IQ domain occupies 46-75; sequence AENNSVAVQSLSRGFLARRKFKQDFRERWI. The 338-residue stretch at 692–1029 folds into the HECT domain; sequence FGKLLKGPIR…VRSGVGFGFS (338 aa). The active-site Glycyl thioester intermediate is cysteine 997.

Its subcellular location is the cytoplasm. The protein localises to the nucleus. It carries out the reaction S-ubiquitinyl-[E2 ubiquitin-conjugating enzyme]-L-cysteine + [acceptor protein]-L-lysine = [E2 ubiquitin-conjugating enzyme]-L-cysteine + N(6)-ubiquitinyl-[acceptor protein]-L-lysine.. Its function is as follows. Probable E3 ubiquitin-protein ligase which mediates ubiquitination and subsequent proteasomal degradation of target proteins. The chain is Probable E3 ubiquitin protein ligase C167.07c from Schizosaccharomyces pombe (strain 972 / ATCC 24843) (Fission yeast).